The sequence spans 492 residues: MKIEMKNISKSFGTNKVLEAIDLTINSGEVHALMGENGAGKSTLMNILTGLFPASGGEIEIDSEKKIFKNPQEAEGFGISFIHQEMNTWPDLTVLENLFLGREIKNKFGILDTKAMRKKANFAFEQLGVKIDLDKEIGNLSVGQQQMVEIAKSFLSDLKILIMDEPTAALTERETERLFSVIAGLKNQGVGIIYISHRMEEIFKITDCITVMRDGLVIDTQKTKETNVDELVRKMVGRSITDYYPPKNAEIREIVFEADHLSAEFFKDISFSVRSGEILGFAGLMGAGRTEVMRAIFGIDKLKSGTIKINGKSLTINNPAQAIKEGIGFLTEDRKDEGLVLDFSIKDNITLPSTKDFIHHGLFDDKTATTFVKQLSERLNVKATDEEQIVGSLSGGNQQKVVLAKWIGIAPKVLILDEPTRGVDVGAKREIYQLMNELAERGVPIIMISSDLPEILGVADRIAVMHEGEIAGILAKNEATQENVMQLATGGQ.

2 consecutive ABC transporter domains span residues 3–239 (IEMK…VGRS) and 249–492 (AEIR…TGGQ). 35–42 (GENGAGKS) lines the ATP pocket.

It belongs to the ABC transporter superfamily. Ribose importer (TC 3.A.1.2.1) family. In terms of assembly, the complex is composed of an ATP-binding protein (RbsA), two transmembrane proteins (RbsC) and a solute-binding protein (RbsB).

Its subcellular location is the cell membrane. It carries out the reaction D-ribose(out) + ATP + H2O = D-ribose(in) + ADP + phosphate + H(+). Part of the ABC transporter complex RbsABC involved in ribose import. Responsible for energy coupling to the transport system. The protein is Ribose import ATP-binding protein RbsA of Lactococcus lactis subsp. lactis (strain IL1403) (Streptococcus lactis).